The primary structure comprises 122 residues: Large ribosomal subunit protein uL14 (122 aa).

The protein belongs to the universal ribosomal protein uL14 family. In terms of assembly, part of the 50S ribosomal subunit. Forms a cluster with proteins L3 and L19. In the 70S ribosome, L14 and L19 interact and together make contacts with the 16S rRNA in bridges B5 and B8.

Its function is as follows. Binds to 23S rRNA. Forms part of two intersubunit bridges in the 70S ribosome. In Streptococcus pneumoniae (strain JJA), this protein is Large ribosomal subunit protein uL14.